The chain runs to 514 residues: Histidine ammonia-lyase (514 aa).

The segment at residues 146–148 (ASG) is a cross-link (5-imidazolinone (Ala-Gly)). Ser147 is modified (2,3-didehydroalanine (Ser)).

This sequence belongs to the PAL/histidase family. Contains an active site 4-methylidene-imidazol-5-one (MIO), which is formed autocatalytically by cyclization and dehydration of residues Ala-Ser-Gly.

The protein resides in the cytoplasm. It catalyses the reaction L-histidine = trans-urocanate + NH4(+). The protein operates within amino-acid degradation; L-histidine degradation into L-glutamate; N-formimidoyl-L-glutamate from L-histidine: step 1/3. This Clostridium tetani (strain Massachusetts / E88) protein is Histidine ammonia-lyase.